The following is a 505-amino-acid chain: ATP synthase subunit alpha (505 aa).

ATP is bound at residue G169–T176.

It belongs to the ATPase alpha/beta chains family. As to quaternary structure, F-type ATPases have 2 components, CF(1) - the catalytic core - and CF(0) - the membrane proton channel. CF(1) has five subunits: alpha(3), beta(3), gamma(1), delta(1), epsilon(1). CF(0) has three main subunits: a(1), b(2) and c(9-12). The alpha and beta chains form an alternating ring which encloses part of the gamma chain. CF(1) is attached to CF(0) by a central stalk formed by the gamma and epsilon chains, while a peripheral stalk is formed by the delta and b chains.

It is found in the cell inner membrane. The enzyme catalyses ATP + H2O + 4 H(+)(in) = ADP + phosphate + 5 H(+)(out). Produces ATP from ADP in the presence of a proton gradient across the membrane. The alpha chain is a regulatory subunit. In Desulfatibacillum aliphaticivorans, this protein is ATP synthase subunit alpha.